A 507-amino-acid polypeptide reads, in one-letter code: MTTIVEEEPLFYIVMLSIGSFFALGSIIIAVILILQHFIHYNKPNHQKYIVRIIMIAPIYAIHSLLSLFFKRQFWALFFDISRDCYEAYVLYCFFKLLICFLGGEEALKELLSKKDTQPLTWPLGYFFSFTPKKSFYRLSLGLVLQYAIIKPTLAIVAAILYYNNKYLEGDFSISQGYLWITVINNISVLIALYFLVMFYEVFQNELSPHSPILKFLVIKSVVFFLFWQTVVITVLIWFDALPKSDVYSSEHIGYFINDFLVCIEMFITSIAMGICFSYSDYVIDKSTHDEILGNGKRSSSRGIGSRSGRNIKISSKIKNIKNNFNRYRHNIGDGLSDVNNPKDIILDTIMVAKLNKNNNNTNNNEINNGIIDNNNSNNIENNGKSRNNIENNIDSQDYFNFIDLNTNDKEKQSKSKYFKIKMPDSDQSSLINLDQCESPSILYGSLNGASNNNNNNNNNNNNINNNNNNNSNNSNNNSNSQFESIDINSNSVNSNKNQSDAILFTF.

A run of 7 helical transmembrane segments spans residues 13–33 (IVML…AVIL), 50–70 (IVRI…SLFF), 88–108 (AYVL…EEAL), 141–161 (LGLV…AAIL), 179–199 (LWIT…LVMF), 222–242 (VVFF…FDAL), and 260–280 (FLVC…FSYS). Residues asparagine 360, asparagine 375, asparagine 470, asparagine 473, asparagine 477, and asparagine 498 are each glycosylated (N-linked (GlcNAc...) asparagine). The tract at residues 448–500 (NGASNNNNNNNNNNNNINNNNNNNSNNSNNNSNSQFESIDINSNSVNSNKNQS) is disordered. The span at 451–500 (SNNNNNNNNNNNNINNNNNNNSNNSNNNSNSQFESIDINSNSVNSNKNQS) shows a compositional bias: low complexity.

Belongs to the TMEM184 family.

It localises to the cell membrane. In terms of biological role, probable transporter. This Dictyostelium discoideum (Social amoeba) protein is Transmembrane protein 184 homolog DDB_G0276041 (tmem184B).